The primary structure comprises 456 residues: Probable glycine dehydrogenase (decarboxylating) subunit 1 (456 aa).

This sequence belongs to the GcvP family. N-terminal subunit subfamily. As to quaternary structure, the glycine cleavage system is composed of four proteins: P, T, L and H. In this organism, the P 'protein' is a heterodimer of two subunits.

It carries out the reaction N(6)-[(R)-lipoyl]-L-lysyl-[glycine-cleavage complex H protein] + glycine + H(+) = N(6)-[(R)-S(8)-aminomethyldihydrolipoyl]-L-lysyl-[glycine-cleavage complex H protein] + CO2. In terms of biological role, the glycine cleavage system catalyzes the degradation of glycine. The P protein binds the alpha-amino group of glycine through its pyridoxal phosphate cofactor; CO(2) is released and the remaining methylamine moiety is then transferred to the lipoamide cofactor of the H protein. This chain is Probable glycine dehydrogenase (decarboxylating) subunit 1, found in Legionella pneumophila subsp. pneumophila (strain Philadelphia 1 / ATCC 33152 / DSM 7513).